The following is a 305-amino-acid chain: Phosphoribosylaminoimidazole-succinocarboxamide synthase (305 aa).

This sequence belongs to the SAICAR synthetase family.

The enzyme catalyses 5-amino-1-(5-phospho-D-ribosyl)imidazole-4-carboxylate + L-aspartate + ATP = (2S)-2-[5-amino-1-(5-phospho-beta-D-ribosyl)imidazole-4-carboxamido]succinate + ADP + phosphate + 2 H(+). It participates in purine metabolism; IMP biosynthesis via de novo pathway; 5-amino-1-(5-phospho-D-ribosyl)imidazole-4-carboxamide from 5-amino-1-(5-phospho-D-ribosyl)imidazole-4-carboxylate: step 1/2. This is Phosphoribosylaminoimidazole-succinocarboxamide synthase from Tropheryma whipplei (strain TW08/27) (Whipple's bacillus).